Consider the following 314-residue polypeptide: Electron transfer flavoprotein subunit alpha (314 aa).

253–281 (LYVAVGISGAIQHLAGMKDSKVIVAINKD) contacts FAD.

It belongs to the ETF alpha-subunit/FixB family. In terms of assembly, heterodimer of an alpha and a beta subunit. FAD serves as cofactor.

Its function is as follows. The electron transfer flavoprotein serves as a specific electron acceptor for other dehydrogenases. It transfers the electrons to the main respiratory chain via ETF-ubiquinone oxidoreductase (ETF dehydrogenase). This chain is Electron transfer flavoprotein subunit alpha (etfA), found in Bradyrhizobium diazoefficiens (strain JCM 10833 / BCRC 13528 / IAM 13628 / NBRC 14792 / USDA 110).